A 118-amino-acid chain; its full sequence is Myotrophin (118 aa).

Residue cysteine 2 is modified to N-acetylcysteine. The stretch at 2-30 is one ANK 1 repeat; it reads CDKEFMWALKNGDLDEVKDYVAKGEDVNR. 3 positions are modified to N6-acetyllysine: lysine 4, lysine 11, and lysine 24. Threonine 31 is subject to Phosphothreonine. ANK repeat units lie at residues 34–66 and 67–99; these read GGRK…APDK and HHIT…VKGP.

This sequence belongs to the myotrophin family. In terms of assembly, interacts with RELA. Interacts with the heterodimer formed by CAPZA1 and CAPZB.

Its subcellular location is the cytoplasm. It localises to the nucleus. The protein resides in the perinuclear region. Functionally, promotes dimerization of NF-kappa-B subunits and regulates NF-kappa-B transcription factor activity. Promotes growth of cardiomyocytes, but not cardiomyocyte proliferation. Promotes cardiac muscle hypertrophy. Plays a role in the regulation of the growth of actin filaments. Inhibits the activity of the F-actin-capping protein complex formed by the CAPZA1 and CAPZB heterodimer. The chain is Myotrophin (MTPN) from Bos taurus (Bovine).